A 2276-amino-acid chain; its full sequence is Non-reducing polyketide synthase VdtA (2276 aa).

An N-terminal acylcarrier protein transacylase (SAT) domain region spans residues 8 to 243; sequence YLFGDQTYDY…KDIPIHAPYH (236 aa). A Ketosynthase family 3 (KS3) domain is found at 372-804; sequence RAKIAIVGMS…GGNSSVLVED (433 aa). Residues Cys544, His679, and His723 each act as for beta-ketoacyl synthase activity in the active site. The segment at 905-1206 is malonyl-CoA:ACP transacylase (MAT) domain; the sequence is FTFTGQGAQY…KALPTLQRNR (302 aa). Ser996 functions as the For acyl/malonyl transferase activity in the catalytic mechanism. The product template (PT) domain stretch occupies residues 1300–1616; the sequence is TTTLHRIVDE…PRRVLRYILQ (317 aa). Residues 1304-1438 are N-terminal hotdog fold; sequence HRIVDEKSTE…CRIKFSDRST (135 aa). The PKS/mFAS DH domain occupies 1304–1612; it reads HRIVDEKSTE…IQGVPRRVLR (309 aa). His1336 acts as the Proton acceptor; for dehydratase activity in catalysis. The C-terminal hotdog fold stretch occupies residues 1465–1612; that stretch reads TYRFNGPMAY…IQGVPRRVLR (148 aa). Asp1525 (proton donor; for dehydratase activity) is an active-site residue. One can recognise a Carrier 1 domain in the interval 1655–1729; the sequence is SGTLTEALRI…DLKRFFDKIN (75 aa). O-(pantetheine 4'-phosphoryl)serine is present on Ser1689. Positions 1735 to 1762 are disordered; the sequence is APAPVSDAPKQLQPSSSPVASATPSAPI. A compositionally biased stretch (low complexity) spans 1748–1761; sequence PSSSPVASATPSAP. Residues 1765–1839 enclose the Carrier 2 domain; that stretch reads RSKFESVLNI…DLKAHFMSKN (75 aa). Ser1799 is modified (O-(pantetheine 4'-phosphoryl)serine). A compositionally biased stretch (polar residues) spans 1840–1854; the sequence is SDNGSSAVLTPQPSR. The interval 1840 to 1882 is disordered; the sequence is SDNGSSAVLTPQPSRDSALPERTRPRVADTSDEEDAPVSANEF. Over residues 1857–1868 the composition is skewed to basic and acidic residues; it reads ALPERTRPRVAD. In terms of domain architecture, Carrier 3 spans 1886–1964; that stretch reads ARSTSKYMAV…GLRSFFGFES (79 aa). Ser1923 carries the O-(pantetheine 4'-phosphoryl)serine modification. The segment at 1967–1993 is disordered; the sequence is TATNPTASQSSSSISSGTSVFDTSPSP. A compositionally biased stretch (low complexity) spans 1969 to 1990; sequence TNPTASQSSSSISSGTSVFDTS. A thioesterase (TE) domain region spans residues 2020 to 2271; that stretch reads PLPPATSVTL…GADHFSLLVS (252 aa).

The protein localises to the cytoplasmic vesicle. The catalysed reaction is 7 malonyl-CoA + acetyl-CoA + 7 H(+) = 7,9,10-trihydroxy-3-(2-oxopropyl)-1H-benzo[g]isochromen-1-one + 7 CO2 + 8 CoA + 2 H2O. It participates in secondary metabolite biosynthesis. Functionally, non-reducing polyketide synthase; part of the gene cluster that mediates the biosynthesis of viriditoxin, one of the 'classical' secondary metabolites produced by fungi and that has antibacterial activity. The first step is performed by the polyketide synthase VdtA which condenses one acetyl-CoA and 6 malonyl-CoA units to form the heptaketide monomer backbone of viriditoxin. The product of VdtA is then O-methylated on C7 by the O-methyltransferase VdtC. The O-methyl group is important for the stereoselective coupling of the monomers at the final step of viriditoxin biosynthesis. The short-chain dehydrogenase/reductase VdtF then acts as a stereospecific reductase converting the pyrone to dihydropyrone via the reduction of the C3-C4 double bond. The FAD-binding monooxygenase VdtE then converts the ketone group into a methyl-ester group to yield semi-viriditoxin. Finally, the laccase VdtB is involved in dimerization of 2 semi-viriditoxin molecules to yield the final viriditoxin. VdtB is responsible for the regioselective 6,6'-coupling of semi-viriditoxin, which yields (M)-viriditoxin and (P)-viriditoxin at a ratio of 1:2. The non-catalytic carboxylesterase-like protein VdtD affects the stereochemistical outcome of the coupling. The highly reducing polyketide synthase VdtX is not involved in viriditoxin synthesis, but might possibly play a role in the production of additional metabolites not identified yet. The polypeptide is Non-reducing polyketide synthase VdtA (Byssochlamys spectabilis (Paecilomyces variotii)).